The following is a 189-amino-acid chain: Elongation factor P (189 aa).

Belongs to the elongation factor P family.

The protein resides in the cytoplasm. It participates in protein biosynthesis; polypeptide chain elongation. Functionally, involved in peptide bond synthesis. Stimulates efficient translation and peptide-bond synthesis on native or reconstituted 70S ribosomes in vitro. Probably functions indirectly by altering the affinity of the ribosome for aminoacyl-tRNA, thus increasing their reactivity as acceptors for peptidyl transferase. The polypeptide is Elongation factor P (Chloroflexus aggregans (strain MD-66 / DSM 9485)).